The primary structure comprises 185 residues: Ribosome-recycling factor (185 aa).

It belongs to the RRF family.

It localises to the cytoplasm. Its function is as follows. Responsible for the release of ribosomes from messenger RNA at the termination of protein biosynthesis. May increase the efficiency of translation by recycling ribosomes from one round of translation to another. The polypeptide is Ribosome-recycling factor (Chloroflexus aurantiacus (strain ATCC 29364 / DSM 637 / Y-400-fl)).